The sequence spans 435 residues: ATP-dependent protease ATPase subunit HslU (435 aa).

Residues Ile18, Gly60–Glu65, Asp248, Glu313, and Arg385 each bind ATP.

Belongs to the ClpX chaperone family. HslU subfamily. A double ring-shaped homohexamer of HslV is capped on each side by a ring-shaped HslU homohexamer. The assembly of the HslU/HslV complex is dependent on binding of ATP.

It is found in the cytoplasm. Its function is as follows. ATPase subunit of a proteasome-like degradation complex; this subunit has chaperone activity. The binding of ATP and its subsequent hydrolysis by HslU are essential for unfolding of protein substrates subsequently hydrolyzed by HslV. HslU recognizes the N-terminal part of its protein substrates and unfolds these before they are guided to HslV for hydrolysis. This chain is ATP-dependent protease ATPase subunit HslU, found in Ruegeria pomeroyi (strain ATCC 700808 / DSM 15171 / DSS-3) (Silicibacter pomeroyi).